The following is a 274-amino-acid chain: Ribosomal RNA small subunit methyltransferase A (274 aa).

Residues Asn-26, Leu-28, Gly-53, Glu-74, Asp-94, and Asn-114 each contribute to the S-adenosyl-L-methionine site.

Belongs to the class I-like SAM-binding methyltransferase superfamily. rRNA adenine N(6)-methyltransferase family. RsmA subfamily.

The protein resides in the cytoplasm. The enzyme catalyses adenosine(1518)/adenosine(1519) in 16S rRNA + 4 S-adenosyl-L-methionine = N(6)-dimethyladenosine(1518)/N(6)-dimethyladenosine(1519) in 16S rRNA + 4 S-adenosyl-L-homocysteine + 4 H(+). In terms of biological role, specifically dimethylates two adjacent adenosines (A1518 and A1519) in the loop of a conserved hairpin near the 3'-end of 16S rRNA in the 30S particle. May play a critical role in biogenesis of 30S subunits. The protein is Ribosomal RNA small subunit methyltransferase A of Bdellovibrio bacteriovorus (strain ATCC 15356 / DSM 50701 / NCIMB 9529 / HD100).